Consider the following 1367-residue polypeptide: Tonsoku-like protein (1367 aa).

TPR repeat units follow at residues 27 to 60, 67 to 100, 107 to 147, 162 to 195, 202 to 235, 242 to 275, 311 to 344, 352 to 385, and 390 to 424; these read AVCCHQLGELLASHGRFQEALEEHQQELHLLESV, AVAHRKIGERLAEMENYSAALKHQHLYLDLAGSL, QRAW…VDEK, TRLYLNLGLTCESLQQTAQCNNYFKKSIFLAEQN, FRARYNLGAIHWRGGQHSQAMRCLEGARECARAM, SECCMLVSQVLQDLGDFLAAKRALKKAYRLGSQK, MAICEQLGDLFSKADDFPKASEAYQKQLHFAELL, AVIHESLATTLGDMKDYHKAVHHYEEELRLRKGN, and AKTWFNIGLAREEAGDAYELLAPCFQKAFGCAQQA. The segment at 460 to 509 is disordered; the sequence is SMAKDTEEEEEEEEEEEEEASEALETSEMELSESEDDADGLSQQLEEEEE. The segment covering 465–509 has biased composition (acidic residues); sequence TEEEEEEEEEEEEEASEALETSEMELSESEDDADGLSQQLEEEEE. ANK repeat units lie at residues 528–557, 561–590, and 597–626; these read MGETLLHRACIEGQLRRVQDLVKQGHPLNP, CGWTPLHEACNYGHLEIVRFLLDHGAAVDD, and DGITPLHDALNCGHFEVAELLIERGASVTL. Disordered stretches follow at residues 660–714 and 726–785; these read MERR…EASP and SAVC…TAIS. Residues 666–684 are compositionally biased toward polar residues; it reads MASSGQASHSSPALQTIPN. Residues 692–713 are compositionally biased toward pro residues; the sequence is TSPPSSPCPKPPSYTPRPPEAS. The segment covering 772-781 has biased composition (basic and acidic residues); sequence KTPDPSKSRE. Arg797 carries the omega-N-methylarginine modification. Disordered regions lie at residues 798 to 820 and 841 to 910; these read GVGSAQSRRLVPSLPRGSNEVPA and TPLT…GPNK. A compositionally biased stretch (low complexity) spans 844 to 857; it reads TRSSSSSRPSTSIS. A compositionally biased stretch (polar residues) spans 894-909; that stretch reads AEPTENSSMPRTTGPN. LRR repeat units follow at residues 1062 to 1086, 1090 to 1118, 1121 to 1144, 1181 to 1205, 1240 to 1263, 1268 to 1293, and 1324 to 1347; these read HTALRELRLSGNRLGDPCATELLAT, MPNLVLLDLSSNHLGPEGLRQLVEGSLGQ, FQNVEELDLSMNPLGDGCAQALAS, AEHLKTLSLSYNTLGAPALARVLQS, GCALAHLTLSANCLSDKAVRELSR, CPSLTSLDLSANPEVSCAGLEELLSA, and LSQLQELQLCSKDLTTKDRDTLCQ.

Belongs to the Tonsoku family. In terms of assembly, component of the MMS22L-TONSL complex, a complex at least composed of MMS22L and TONSL/NFKBIL2. Interacts with the MCM complex, the FACT complex and the RPA complex. Interacts with MCM5; the interaction is direct. Binds histones, with a strong preference for histone H3.1 (histones H3.1 and H3-4/H3.1t). Interacts (via ANK repeats) with histone H4; specifically binds histone H4 lacking methylation at 'Lys-20' (H4K20me0). May interact with DNAJC9; the interaction seems to be histone-dependent.

The protein localises to the nucleus. The protein resides in the chromosome. Its subcellular location is the cytoplasm. Component of the MMS22L-TONSL complex, a complex that promotes homologous recombination-mediated repair of double-strand breaks (DSBs) at stalled or collapsed replication forks. The MMS22L-TONSL complex is required to maintain genome integrity during DNA replication. It mediates the assembly of RAD51 filaments on single-stranded DNA (ssDNA): the MMS22L-TONSL complex is recruited to DSBs following histone replacement by histone chaperones and eviction of the replication protein A complex (RPA/RP-A) from DSBs. Following recruitment to DSBs, the TONSL-MMS22L complex promotes recruitment of RAD51 filaments and subsequent homologous recombination. Within the complex, TONSL acts as a histone reader, which recognizes and binds newly synthesized histones following their replacement by histone chaperones. Specifically binds histone H4 lacking methylation at 'Lys-20' (H4K20me0) and histone H3.1. The chain is Tonsoku-like protein from Rattus norvegicus (Rat).